The sequence spans 283 residues: Pantothenate synthetase (283 aa).

ATP is bound at residue 30-37 (MGNLHLGH). The active-site Proton donor is the His-37. A (R)-pantoate-binding site is contributed by Gln-61. Position 61 (Gln-61) interacts with beta-alanine. An ATP-binding site is contributed by 149–152 (GQKD). Gln-155 contacts (R)-pantoate. Residues Ile-178 and 186–189 (MSSR) each bind ATP.

It belongs to the pantothenate synthetase family. Homodimer.

Its subcellular location is the cytoplasm. It catalyses the reaction (R)-pantoate + beta-alanine + ATP = (R)-pantothenate + AMP + diphosphate + H(+). The protein operates within cofactor biosynthesis; (R)-pantothenate biosynthesis; (R)-pantothenate from (R)-pantoate and beta-alanine: step 1/1. In terms of biological role, catalyzes the condensation of pantoate with beta-alanine in an ATP-dependent reaction via a pantoyl-adenylate intermediate. This is Pantothenate synthetase from Shewanella pealeana (strain ATCC 700345 / ANG-SQ1).